A 463-amino-acid chain; its full sequence is Protein MRG3-like (463 aa).

A helical membrane pass occupies residues 54-74; that stretch reads WVLSTGIVSFIAFNIWWVYWP. TPR repeat units follow at residues 84–118, 128–161, 358–389, and 409–442; these read KILR…CKAE, TGIE…FYNE, ELIR…ANEN, and SLAH…SEMI.

This sequence belongs to the MGR3 family.

It localises to the membrane. The protein is Protein MRG3-like of Saccharomyces cerevisiae (strain ATCC 204508 / S288c) (Baker's yeast).